The following is a 211-amino-acid chain: Small ribosomal subunit protein uS3c (211 aa).

In terms of domain architecture, KH type-2 spans 39–109 (IREFAESRLP…NVALYVTKTQ (71 aa)).

This sequence belongs to the universal ribosomal protein uS3 family. Part of the 30S ribosomal subunit.

It localises to the plastid. Its subcellular location is the chloroplast. In Ostreococcus tauri, this protein is Small ribosomal subunit protein uS3c (rps3).